The chain runs to 349 residues: Glycerol-3-phosphate dehydrogenase [NAD(P)+] (349 aa).

Positions 12, 13, and 107 each coordinate NADPH. Sn-glycerol 3-phosphate-binding residues include Lys-107, Gly-138, and Ser-140. Ala-142 contributes to the NADPH binding site. Positions 193, 246, 256, 257, and 258 each coordinate sn-glycerol 3-phosphate. Lys-193 acts as the Proton acceptor in catalysis. Arg-257 lines the NADPH pocket. Positions 281 and 283 each coordinate NADPH.

This sequence belongs to the NAD-dependent glycerol-3-phosphate dehydrogenase family.

It is found in the cytoplasm. The catalysed reaction is sn-glycerol 3-phosphate + NAD(+) = dihydroxyacetone phosphate + NADH + H(+). It carries out the reaction sn-glycerol 3-phosphate + NADP(+) = dihydroxyacetone phosphate + NADPH + H(+). It functions in the pathway membrane lipid metabolism; glycerophospholipid metabolism. In terms of biological role, catalyzes the reduction of the glycolytic intermediate dihydroxyacetone phosphate (DHAP) to sn-glycerol 3-phosphate (G3P), the key precursor for phospholipid synthesis. This chain is Glycerol-3-phosphate dehydrogenase [NAD(P)+], found in Pelotomaculum thermopropionicum (strain DSM 13744 / JCM 10971 / SI).